The chain runs to 406 residues: B3 domain-containing protein Os11g0197600 (406 aa).

The tract at residues 1 to 20 (MVVREKQGGRMGKGKGKGKE) is disordered. Residues 30–123 (RSFFRVLLTL…QFSVTVFEPS (94 aa)) constitute a DNA-binding region (TF-B3 1). The tract at residues 199 to 245 (ESSRRKRAGASAGKSKVTSTSHNSTRGSSCSSDEDNSSSKSPNPPFL) is disordered. A compositionally biased stretch (polar residues) spans 214 to 225 (KVTSTSHNSTRG). Residues 298-393 (AVQIMMESYV…NIKVHIYRVV (96 aa)) constitute a DNA-binding region (TF-B3 2).

It is found in the nucleus. The sequence is that of B3 domain-containing protein Os11g0197600 from Oryza sativa subsp. japonica (Rice).